A 290-amino-acid polypeptide reads, in one-letter code: Arylamine N-acetyltransferase 2 (290 aa).

Residue Cys-68 is the Acyl-thioester intermediate of the active site. CoA-binding residues include Ser-103 and Gly-104. 106–107 is a binding site for substrate; that stretch reads IH. Catalysis depends on residues His-107 and Asp-122. CoA is bound at residue Tyr-208.

The protein belongs to the arylamine N-acetyltransferase family.

Its subcellular location is the cytoplasm. It catalyses the reaction an arylamine + acetyl-CoA = an N-acetylarylamine + CoA. The catalysed reaction is an N-hydroxyarylamine + acetyl-CoA = an N-acetoxyarylamine + CoA. Functionally, catalyzes the N- or O-acetylation of various arylamine and heterocyclic amine substrates. Participates in the detoxification of a plethora of hydrazine and arylamine drugs. This is Arylamine N-acetyltransferase 2 (Nat2) from Rattus norvegicus (Rat).